Here is a 261-residue protein sequence, read N- to C-terminus: 4-phosphopantoate--beta-alanine ligase (261 aa).

Residues R17, R39, 181-183, 187-188, and 199-200 contribute to the ATP site; these read DLN, RS, and NI.

This sequence belongs to the archaeal phosphopantothenate synthetase family. As to quaternary structure, homodimer.

The catalysed reaction is (R)-4-phosphopantoate + beta-alanine + ATP = (R)-4'-phosphopantothenate + AMP + diphosphate + H(+). Its pathway is cofactor biosynthesis; coenzyme A biosynthesis. Its activity is regulated as follows. Activity is not affected by 4'-phosphopantothenate or CoA/acetyl-CoA. In terms of biological role, catalyzes the condensation of (R)-4-phosphopantoate and beta-alanine to 4'-phosphopantothenate in the CoA biosynthesis pathway. Cannot use (R)-pantoate as substrate and thus does not display pantothenate synthetase (PS) activity. Displays strict specificity for its natural substrates, 4-phosphopantoate, ATP and beta-alanine. In Thermococcus kodakarensis (strain ATCC BAA-918 / JCM 12380 / KOD1) (Pyrococcus kodakaraensis (strain KOD1)), this protein is 4-phosphopantoate--beta-alanine ligase.